The following is a 438-amino-acid chain: uncharacterized protein (438 aa).

Zn(2+) is bound at residue His59. Catalysis depends on Glu62, which acts as the Proton acceptor. Residues His63 and Glu139 each coordinate Zn(2+).

Belongs to the peptidase M16 family. Requires Zn(2+) as cofactor.

This is an uncharacterized protein from Mycobacterium tuberculosis (strain CDC 1551 / Oshkosh).